Consider the following 434-residue polypeptide: Enolase 2 (434 aa).

Gln-171 contacts (2R)-2-phosphoglycerate. Catalysis depends on Glu-213, which acts as the Proton donor. 3 residues coordinate Mg(2+): Asp-250, Glu-293, and Asp-320. (2R)-2-phosphoglycerate contacts are provided by Lys-345, Arg-374, Ser-375, and Lys-396. Catalysis depends on Lys-345, which acts as the Proton acceptor.

It belongs to the enolase family. Requires Mg(2+) as cofactor.

The protein resides in the cytoplasm. The protein localises to the secreted. Its subcellular location is the cell surface. It catalyses the reaction (2R)-2-phosphoglycerate = phosphoenolpyruvate + H2O. Its pathway is carbohydrate degradation; glycolysis; pyruvate from D-glyceraldehyde 3-phosphate: step 4/5. Its function is as follows. Catalyzes the reversible conversion of 2-phosphoglycerate (2-PG) into phosphoenolpyruvate (PEP). It is essential for the degradation of carbohydrates via glycolysis. This chain is Enolase 2, found in Streptomyces coelicolor (strain ATCC BAA-471 / A3(2) / M145).